We begin with the raw amino-acid sequence, 323 residues long: Putative CDC123-like protein L884 (323 aa).

The protein belongs to the CDC123 family.

The protein is Putative CDC123-like protein L884 of Acanthamoeba polyphaga mimivirus (APMV).